A 437-amino-acid polypeptide reads, in one-letter code: Phosphomethylpyrimidine synthase (437 aa).

Substrate is bound by residues N69, M98, Y127, H163, 185–187, 226–229, and E265; these read SRG and DACR. Position 269 (H269) interacts with Zn(2+). Y292 lines the substrate pocket. H333 lines the Zn(2+) pocket. 3 residues coordinate [4Fe-4S] cluster: C409, C412, and C416.

It belongs to the ThiC family. Requires [4Fe-4S] cluster as cofactor.

It catalyses the reaction 5-amino-1-(5-phospho-beta-D-ribosyl)imidazole + S-adenosyl-L-methionine = 4-amino-2-methyl-5-(phosphooxymethyl)pyrimidine + CO + 5'-deoxyadenosine + formate + L-methionine + 3 H(+). It functions in the pathway cofactor biosynthesis; thiamine diphosphate biosynthesis. In terms of biological role, catalyzes the synthesis of the hydroxymethylpyrimidine phosphate (HMP-P) moiety of thiamine from aminoimidazole ribotide (AIR) in a radical S-adenosyl-L-methionine (SAM)-dependent reaction. The protein is Phosphomethylpyrimidine synthase of Alkaliphilus metalliredigens (strain QYMF).